Consider the following 160-residue polypeptide: Large ribosomal subunit protein uL16 (160 aa).

Residues 138-160 form a disordered region; the sequence is INLSSDSSGEGKTGKDSKEEVKK. A compositionally biased stretch (basic and acidic residues) spans 149–160; that stretch reads KTGKDSKEEVKK.

Belongs to the universal ribosomal protein uL16 family. Part of the 50S ribosomal subunit.

In terms of biological role, binds 23S rRNA and is also seen to make contacts with the A and possibly P site tRNAs. This Prochlorococcus marinus subsp. pastoris (strain CCMP1986 / NIES-2087 / MED4) protein is Large ribosomal subunit protein uL16.